Here is a 422-residue protein sequence, read N- to C-terminus: Elongation factor 1-alpha (422 aa).

In terms of domain architecture, tr-type G spans 5–221; it reads KPHMNLAVIG…DELKEPEKPS (217 aa). Residues 14-21 form a G1 region; sequence GHIDHGKS. Position 14–21 (14–21) interacts with GTP; that stretch reads GHIDHGKS. A Mg(2+)-binding site is contributed by S21. The G2 stretch occupies residues 70–74; sequence GITID. Positions 91–94 are G3; the sequence is DCPG. Residues 91–95 and 146–149 each bind GTP; these read DCPGH and NKMD. Residues 146-149 form a G4 region; it reads NKMD. Positions 185–187 are G5; it reads SAF.

It belongs to the TRAFAC class translation factor GTPase superfamily. Classic translation factor GTPase family. EF-Tu/EF-1A subfamily.

The protein resides in the cytoplasm. It catalyses the reaction GTP + H2O = GDP + phosphate + H(+). Its function is as follows. GTP hydrolase that promotes the GTP-dependent binding of aminoacyl-tRNA to the A-site of ribosomes during protein biosynthesis. This chain is Elongation factor 1-alpha, found in Methanosarcina acetivorans (strain ATCC 35395 / DSM 2834 / JCM 12185 / C2A).